A 215-amino-acid polypeptide reads, in one-letter code: Urease accessory protein UreG 2 (215 aa).

11-18 is a binding site for GTP; it reads GPVGSGKT.

The protein belongs to the SIMIBI class G3E GTPase family. UreG subfamily. Homodimer. UreD, UreF and UreG form a complex that acts as a GTP-hydrolysis-dependent molecular chaperone, activating the urease apoprotein by helping to assemble the nickel containing metallocenter of UreC. The UreE protein probably delivers the nickel.

The protein resides in the cytoplasm. In terms of biological role, facilitates the functional incorporation of the urease nickel metallocenter. This process requires GTP hydrolysis, probably effectuated by UreG. The protein is Urease accessory protein UreG 2 of Methylorubrum populi (strain ATCC BAA-705 / NCIMB 13946 / BJ001) (Methylobacterium populi).